The sequence spans 1630 residues: Transient receptor potential cation channel subfamily M member 1 (1630 aa).

Disordered regions lie at residues 1–25 (MGSMRKMSSSFKRGSIKSSTSGSQK), 65–92 (PLPSVTPSSTAEDTKQGDAQSGKWSVSK), 453–492 (APPVDTKVAEKEKKPPTATTKGRGKGKGKKKGKVKEEVEE), 620–643 (LGMEDDEPPAKGKKKKKKKKEEEI), and 824–858 (SKENEDGKEKEEENVDANADAGSRKGDEENEHKKQ). The Cytoplasmic portion of the chain corresponds to 1 to 877 (MGSMRKMSSS…CEFYNAPIVK (877 aa)). The segment covering 8-25 (SSSFKRGSIKSSTSGSQK) has biased composition (low complexity). Polar residues predominate over residues 69–92 (VTPSSTAEDTKQGDAQSGKWSVSK). Residues 474-485 (GRGKGKGKKKGK) are compositionally biased toward basic residues. 2 stretches are compositionally biased toward basic and acidic residues: residues 825–834 (KENEDGKEKE) and 845–855 (GSRKGDEENEH). Residues 878-898 (FWFYTISYLGYLLLFNYVILV) traverse the membrane as a helical segment. The Extracellular segment spans residues 899–944 (RMDGWPSPQEWIVISYIVSLALEKIREILMSEPGKLSQKIKVWLQE). The helical transmembrane segment at 945–965 (YWNITDLVAISMFMVGAILRL) threads the bilayer. The Cytoplasmic segment spans residues 966–975 (QNQPYMGYGR). The chain crosses the membrane as a helical span at residues 976–996 (VIYCVDIILWYIRVLDIFGVN). Topologically, residues 997 to 1008 (KYLGPYVMMIGK) are extracellular. A helical transmembrane segment spans residues 1009 to 1029 (MMIDMLYFVVIMLVVLMSFGV). Over 1030–1107 (ARQAILHPEE…CIPGAWLTPA (78 aa)) the chain is Cytoplasmic. The chain crosses the membrane as a helical span at residues 1108–1128 (LMACYLLVANILLVNLLIAVF). Asparagine 1129 carries N-linked (GlcNAc...) asparagine glycosylation. The Extracellular segment spans residues 1129–1158 (NNTFFEVKSISNQVWKFQRYQLIMTFHDRP). A helical transmembrane segment spans residues 1159 to 1179 (VLPPPMIILSHIYIIVMRLSG). Residues 1180–1630 (RCRKKREGDQ…QEKGNPETEC (451 aa)) are Cytoplasmic-facing. A coiled-coil region spans residues 1235 to 1255 (IRVTSERVENMSMRLEEINER). Disordered regions lie at residues 1362–1414 (EDVK…AGEL) and 1575–1630 (CLRS…ETEC).

It belongs to the transient receptor (TC 1.A.4) family. LTrpC subfamily. TRPM1 sub-subfamily. Interacts with TRPM3; the interaction results in the formation of a heteromultimeric cation channel complex that are functionally different from the homomeric channels. Interacts with GPR179. Associates with both guanine nucleotide-binding proteins G(o) and beta-gamma G protein dimer; implicated in directly regulating TRPM1 channel open-state.

It is found in the cell membrane. The protein resides in the endoplasmic reticulum membrane. Its subcellular location is the cell projection. The protein localises to the axon. It carries out the reaction Ca(2+)(in) = Ca(2+)(out). The catalysed reaction is Mg(2+)(in) = Mg(2+)(out). The enzyme catalyses Mn(2+)(in) = Mn(2+)(out). It catalyses the reaction Ni(2+)(in) = Ni(2+)(out). Inhibited by extracellular zinc ions. Inhibited by intracellular Mg(2+). Activated by the neuroactive steroid pregnenolone sulfate. Negatively regulated by activation of GRM6 receptors in the ON-bipolar cells. In terms of biological role, constitutively open nonselective divalent cation-conducting channels which mediate the influx of Ca(2+), Mg(2+), Mn(2+), Ba(2+), and Ni(2+) into the cytoplasm, leading to membrane depolarization. Impermeable to zinc ions. In addition, forms heteromultimeric ion channels with TRPM3 which are permeable for calcium and zinc ions. Plays an essential role for the depolarizing photoresponse of retinal ON bipolar cells. In the dark, tonic release of glutamate activates the G-protein coupled receptor for glutamate GRM6, its activation induces the release of G(o) protein and the beta-gamma G protein dimer. Both subunits can interact and inactivate the TRPM1 channel. A light onset, induces decrease in glutamate release and deactivation of GRM6 leading to channel opening and membrane depolarization. May play a role in metastasis suppression. In Rattus norvegicus (Rat), this protein is Transient receptor potential cation channel subfamily M member 1.